Here is a 449-residue protein sequence, read N- to C-terminus: Glucose-6-phosphate isomerase (449 aa).

Threonine 38 carries the post-translational modification Phosphothreonine. Glutamate 290 serves as the catalytic Proton donor. Residues histidine 311 and lysine 425 contribute to the active site.

This sequence belongs to the GPI family.

Its subcellular location is the cytoplasm. The catalysed reaction is alpha-D-glucose 6-phosphate = beta-D-fructose 6-phosphate. It functions in the pathway carbohydrate biosynthesis; gluconeogenesis. It participates in carbohydrate degradation; glycolysis; D-glyceraldehyde 3-phosphate and glycerone phosphate from D-glucose: step 2/4. Functionally, catalyzes the reversible isomerization of glucose-6-phosphate to fructose-6-phosphate. This chain is Glucose-6-phosphate isomerase, found in Geobacillus thermodenitrificans (strain NG80-2).